A 61-amino-acid polypeptide reads, in one-letter code: Large ribosomal subunit protein uL30 (61 aa).

This sequence belongs to the universal ribosomal protein uL30 family. As to quaternary structure, part of the 50S ribosomal subunit.

This Bordetella petrii (strain ATCC BAA-461 / DSM 12804 / CCUG 43448) protein is Large ribosomal subunit protein uL30.